A 312-amino-acid chain; its full sequence is Probable deoxyhypusine synthase (312 aa).

Residue Lys-285 is the Nucleophile of the active site.

The protein belongs to the deoxyhypusine synthase family. The cofactor is NAD(+).

It catalyses the reaction [eIF5A protein]-L-lysine + spermidine = [eIF5A protein]-deoxyhypusine + propane-1,3-diamine. It participates in protein modification; eIF5A hypusination. Catalyzes the NAD-dependent oxidative cleavage of spermidine and the subsequent transfer of the butylamine moiety of spermidine to the epsilon-amino group of a specific lysine residue of the eIF-5A precursor protein to form the intermediate deoxyhypusine residue. The chain is Probable deoxyhypusine synthase from Saccharolobus islandicus (strain M.16.4 / Kamchatka #3) (Sulfolobus islandicus).